Reading from the N-terminus, the 298-residue chain is ATP synthase gamma chain (298 aa).

It belongs to the ATPase gamma chain family. In terms of assembly, F-type ATPases have 2 components, CF(1) - the catalytic core - and CF(0) - the membrane proton channel. CF(1) has five subunits: alpha(3), beta(3), gamma(1), delta(1), epsilon(1). CF(0) has three main subunits: a, b and c.

It localises to the cell inner membrane. Its function is as follows. Produces ATP from ADP in the presence of a proton gradient across the membrane. The gamma chain is believed to be important in regulating ATPase activity and the flow of protons through the CF(0) complex. The chain is ATP synthase gamma chain from Francisella tularensis subsp. holarctica (strain LVS).